The following is a 153-amino-acid chain: MQILVDADACPVKDIITKNAKKYGIPVIMIIDTSHELNDGYSTVITVDKARDSVDIKLINMVQRGDIVVTQDYGVAAMGLGKGAKVLNQNGLIYSDANIDRLLFERHLGQKIRRAGGRTGTIRKRSKENDEAFEKALLLFIKPESEGPRDLKI.

This sequence belongs to the UPF0178 family.

The protein is UPF0178 protein Ccel_2994 of Ruminiclostridium cellulolyticum (strain ATCC 35319 / DSM 5812 / JCM 6584 / H10) (Clostridium cellulolyticum).